The following is a 110-amino-acid chain: Large ribosomal subunit protein uL22 (110 aa).

Belongs to the universal ribosomal protein uL22 family. Part of the 50S ribosomal subunit.

Functionally, this protein binds specifically to 23S rRNA; its binding is stimulated by other ribosomal proteins, e.g. L4, L17, and L20. It is important during the early stages of 50S assembly. It makes multiple contacts with different domains of the 23S rRNA in the assembled 50S subunit and ribosome. The globular domain of the protein is located near the polypeptide exit tunnel on the outside of the subunit, while an extended beta-hairpin is found that lines the wall of the exit tunnel in the center of the 70S ribosome. The protein is Large ribosomal subunit protein uL22 of Shewanella amazonensis (strain ATCC BAA-1098 / SB2B).